Reading from the N-terminus, the 196-residue chain is Bcl-2-like protein 11 (196 aa).

The tract at residues 1 to 68 (MAKQPSDVNS…PLAPPASPGP (68 aa)) is disordered. Positions 34–43 (TSLQTESQGN) are enriched in polar residues. At S65 the chain carries Phosphoserine; by MAPK. 3 positions are modified to phosphoserine: S73, S83, and S90. A disordered region spans residues 90–114 (SGYFSFDTDRSPAPMSCDKSTQTPS). The short motif at 146–160 (IAQELRRIGDEFNET) is the BH3 element.

The protein belongs to the Bcl-2 family. As to quaternary structure, forms heterodimers with a number of antiapoptotic Bcl-2 proteins, including MCL1, BCL2, BCL2L1 isoform Bcl-X(L), BCL2A1/BFL-1, and BCL2L2/BCLW. Does not heterodimerize with proapoptotic proteins such as BAD, BOK or BAK. Identified in a complex containing BCL2L11, DYNLL1 and BCL2L1 isoform Bcl-X(L); BH3 integrity is required for BCL2L1-binding. Interacts with YWHAZ. When phosphorylated, interacts with TRIM2; this interaction is associated with ubiquitination and degradation. Interacts (via BH3) with MCL1; this interaction may sequester BCL2L11 and prevent its pro-apoptotic activity. When phosphorylated, isoform BimEL interacts with USP27X; this interaction leads to BCL2L11 deubiquitination and stabilization. Interacts with GIMAP5. Interacts with BCL2L10/BCL-B. Post-translationally, phosphorylation at Ser-65 by MAPK1/MAPK3 leads interaction with TRIM2 and ubiquitination, followed by proteasomal degradation. Deubiquitination catalyzed by USP27X stabilizes the protein. Ubiquitination by TRIM2 following phosphorylation by MAPK1/MAPK3 leads to proteasomal degradation. Conversely, deubiquitination catalyzed by USP27X stabilizes the protein. In terms of tissue distribution, widely expressed.

The protein localises to the membrane. The protein resides in the mitochondrion. Induces apoptosis and anoikis. This chain is Bcl-2-like protein 11 (Bcl2l11), found in Rattus norvegicus (Rat).